Consider the following 186-residue polypeptide: TATA box-binding protein-like 1 (186 aa).

Belongs to the TBP family. In terms of tissue distribution, expressed ubiquitously with highest expression in the ovary and testis.

Its subcellular location is the cytoplasm. It is found in the nucleus. Functionally, part of a specialized transcription system that mediates the transcription of most ribosomal proteins through the 5'-TCT-3' motif which is a core promoter element at these genes. Seems to also mediate the transcription of NF1. Does not bind the TATA box. Members of the TBP family are differentially required to regulate transcription and development during early embryogenesis. Particularly regulates genes that have a role in catabolism. The sequence is that of TATA box-binding protein-like 1 (tbpl1) from Xenopus laevis (African clawed frog).